Reading from the N-terminus, the 504-residue chain is Maturase K (504 aa).

Belongs to the intron maturase 2 family. MatK subfamily.

Its subcellular location is the plastid. It localises to the chloroplast. Functionally, usually encoded in the trnK tRNA gene intron. Probably assists in splicing its own and other chloroplast group II introns. This is Maturase K from Quercus coccifera (Kermes oak).